We begin with the raw amino-acid sequence, 187 residues long: MFRVITRGAHTAASRQALIEKIIRVDHAGELGADRIYAGQLAVLQGSSVGSVIKKMWDEEKEHLDTMERLAAKHNVPHTVFSPVFSVAAYALGVGSALLGKEGAMACTIAVEELIGQHYNDQLKELLADDPETHKELLKILTRLRDEELHHHDTGVEHDGMKAPAYSALKWIIQTGCKGAIAIAEKI.

Residues 1 to 8 (MFRVITRG) constitute a mitochondrion transit peptide. Lys21 is an NADH binding site. 2 tandem repeats follow at residues 28–99 (AGEL…SALL) and 100–187 (GKEG…AEKI). The interval 28-187 (AGELGADRIY…KGAIAIAEKI (160 aa)) is 2 X approximate tandem repeats. The Fe cation site is built by Glu30, Glu60, His63, Glu112, Glu148, and His151. Lys186 contacts NADH.

It belongs to the COQ7 family. In terms of assembly, component of a multi-subunit COQ enzyme complex. It depends on Fe cation as a cofactor.

It is found in the mitochondrion inner membrane. It localises to the mitochondrion. The protein localises to the nucleus. It carries out the reaction a 5-methoxy-2-methyl-3-(all-trans-polyprenyl)benzoquinone + NADH + O2 = a 3-demethylubiquinone + NAD(+) + H2O. It participates in cofactor biosynthesis; ubiquinone biosynthesis. Functionally, catalyzes the hydroxylation of the 5-methoxy-2-methyl-3-(all-trans-polyprenyl)benzoquinone at the C6 position and participates in the biosynthesis of ubiquinone. Catalyzes the reaction through a substrate-mediated reduction pathway, whereby NADH shuttles electrons to 5-methoxy-2-methyl-3-(all-trans-decaprenyl)benzoquinone, which then transfers the electrons to the two Fe(3+) centers. The binding of 5-methoxy-2-methyl-3-(all-trans-polyprenyl)benzoquinone (DMQn) mediates reduction of the diiron center by nicotinamide adenine dinucleotide (NADH) and initiates oxygen activation for subsequent DMQ hydroxylation. Also has a structural role in the COQ enzyme complex, stabilizing other COQ polypeptides. Involved in lifespan determination in a ubiquinone-independent manner. Plays a role in modulating mitochondrial stress responses, acting in the nucleus, perhaps via regulating gene expression, independent of its characterized mitochondrial function in ubiquinone biosynthesis. Plays a role in modulating polyribosome formation. The chain is NADPH-dependent 3-demethoxyubiquinone 3-hydroxylase, mitochondrial from Caenorhabditis elegans.